The primary structure comprises 3527 residues: BEACH domain-containing protein A2 (3527 aa).

3 disordered regions span residues 25–46 (AGEAISDPTTPPSSSQASPSSS), 385–423 (SSPHKNRGSNDSKKQPPLSLKTRQNDDSEKQQSLSLNSR), and 454–490 (ESSGTSTSLLSQTKLTGYSRRQTPSANNRYDEPCEQG). A compositionally biased stretch (low complexity) spans 28–46 (AISDPTTPPSSSQASPSSS). Residues 455–469 (SSGTSTSLLSQTKLT) are compositionally biased toward low complexity. The segment covering 472–481 (SRRQTPSANN) has biased composition (polar residues). LRR repeat units lie at residues 1447–1470 (KLESGQTTISMSPTEIIPENNYED), 1499–1522 (FSHLSELEMGDNPVETSNCIVLSN), 1542–1565 (SIQIASLGFLENLISILWYRSHNL), 1566–1588 (AILRQINLVKHLLVTLQRGDVEV), and 2001–2024 (SSEMKSLDLTGSSSQVQPIDSRSS). 2 disordered regions span residues 1992-2023 (GDHVGSVSASSEMKSLDLTGSSSQVQPIDSRS) and 2046-2081 (IPSPSKSSTISTPHPSHISVSEFDASSDQSSGSQGS). The segment covering 1998–2020 (VSASSEMKSLDLTGSSSQVQPID) has biased composition (polar residues). LRR repeat units lie at residues 2128–2151 (TEQIKAVQALESILEMLPLYVDPE), 2221–2247 (LLSILQLANKDGRVEEVTSSGKGLLSI), and 2313–2336 (VSAVLQLLVANKNIILCPSNLDTD). Residues 2658-2680 (VNTDEKSETGSPIKSSSGKMDEI) form a disordered region. The span at 2666-2675 (TGSPIKSSSG) shows a compositional bias: polar residues. The region spanning 2704-2871 (EHLEKIRFRY…EREEVFRNLL (168 aa)) is the BEACH-type PH domain. Positions 2896 to 3188 (GSRLFKLMAK…QLFQKPHVKR (293 aa)) constitute a BEACH domain. WD repeat units follow at residues 3272-3311 (HEGNQIQCAGVSHDGRIVVTGAEDGLVSVWRVSKDGPRGS), 3322-3361 (AHTAKVICLRVSQPYMMIASSSDDCTVIIWDLSSLSFVRQ), 3410-3451 (DLIV…DPVS), and 3483-3522 (FHKQPVTSLHLTTDLKQLLSGDSAGHLLSWTVPDEILKAS).

This chain is BEACH domain-containing protein A2, found in Arabidopsis thaliana (Mouse-ear cress).